The chain runs to 119 residues: Beta-2-microglobulin (119 aa).

The first 20 residues, 1–20, serve as a signal peptide directing secretion; the sequence is MARFVVVALLVLLSLSGLEA. The Ig-like C1-type domain maps to 25 to 114; the sequence is PKIQVYSRHP…VTLSTPKTVK (90 aa). A disulfide bridge links Cys-45 with Cys-100.

This sequence belongs to the beta-2-microglobulin family. In terms of assembly, heterodimer of an alpha chain and a beta chain. Beta-2-microglobulin is the beta-chain of major histocompatibility complex class I molecules.

It localises to the secreted. Functionally, component of the class I major histocompatibility complex (MHC). Involved in the presentation of peptide antigens to the immune system. In Aotus lemurinus (Gray-bellied night monkey), this protein is Beta-2-microglobulin (B2M).